We begin with the raw amino-acid sequence, 431 residues long: Dihydroorotase (431 aa).

The Zn(2+) site is built by His55 and His57. Residues 57–59 (HFR) and Asn89 each bind substrate. Zn(2+) is bound by residues Lys139, His169, His223, and Asp290. Lys139 carries the N6-carboxylysine modification. Asp290 is a catalytic residue. Substrate is bound by residues His294 and 308–309 (PG).

The protein belongs to the metallo-dependent hydrolases superfamily. DHOase family. Class I DHOase subfamily. Zn(2+) serves as cofactor.

The enzyme catalyses (S)-dihydroorotate + H2O = N-carbamoyl-L-aspartate + H(+). It participates in pyrimidine metabolism; UMP biosynthesis via de novo pathway; (S)-dihydroorotate from bicarbonate: step 3/3. Functionally, catalyzes the reversible cyclization of carbamoyl aspartate to dihydroorotate. The polypeptide is Dihydroorotase (Methanothermobacter thermautotrophicus (strain ATCC 29096 / DSM 1053 / JCM 10044 / NBRC 100330 / Delta H) (Methanobacterium thermoautotrophicum)).